A 422-amino-acid chain; its full sequence is UDP-N-acetylglucosamine 1-carboxyvinyltransferase (422 aa).

22–23 (KN) contacts phosphoenolpyruvate. R93 provides a ligand contact to UDP-N-acetyl-alpha-D-glucosamine. The Proton donor role is filled by C117. C117 is modified (2-(S-cysteinyl)pyruvic acid O-phosphothioketal). Residues 122–126 (RPVDL), D308, and I330 contribute to the UDP-N-acetyl-alpha-D-glucosamine site.

It belongs to the EPSP synthase family. MurA subfamily.

Its subcellular location is the cytoplasm. It carries out the reaction phosphoenolpyruvate + UDP-N-acetyl-alpha-D-glucosamine = UDP-N-acetyl-3-O-(1-carboxyvinyl)-alpha-D-glucosamine + phosphate. It functions in the pathway cell wall biogenesis; peptidoglycan biosynthesis. Functionally, cell wall formation. Adds enolpyruvyl to UDP-N-acetylglucosamine. This Legionella pneumophila (strain Paris) protein is UDP-N-acetylglucosamine 1-carboxyvinyltransferase.